A 230-amino-acid chain; its full sequence is Claudin-2 (230 aa).

The Cytoplasmic portion of the chain corresponds to 1–7 (MASLGLQ). The helical transmembrane segment at 8 to 28 (LVGYILGLLGLLGTLVAMLLP) threads the bilayer. Topologically, residues 29–81 (SWRTSSYVGTSIVTAVGFSKGLWMECATHSTGITQCDIYSTLLGLPADIQAAQ) are extracellular. Cys54 and Cys64 are oxidised to a cystine. Residues 82 to 102 (AMMVTSSAISSLACIVSVVGM) form a helical membrane-spanning segment. The Cytoplasmic segment spans residues 103–116 (RCTVFCQDSRAKDR). A helical transmembrane segment spans residues 117-137 (LAVVGGVFFIIGGLLGFIPVA). The Extracellular portion of the chain corresponds to 138–162 (WNLHGILRDFYSPLVPDSMKFEIGE). The helical transmembrane segment at 163-183 (ALYLGIISSLFSLVAGIILCF) threads the bilayer. The Cytoplasmic portion of the chain corresponds to 184 to 230 (SCPLQGNRSDYYDSYQAQPLATRGSPRPGQPPKAKSEFNSYSLTGYV). Residues 205–230 (TRGSPRPGQPPKAKSEFNSYSLTGYV) form a disordered region. Lys218 is covalently cross-linked (Glycyl lysine isopeptide (Lys-Gly) (interchain with G-Cter in SUMO)). Residues Ser219 and Ser223 each carry the phosphoserine modification. Positions 220-230 (EFNSYSLTGYV) are enriched in polar residues. An interaction with TJP1, TJP2 and TJP3 region spans residues 229–230 (YV).

The protein belongs to the claudin family. Can form homo- and heteropolymers with other claudins to mediate paracellular barrier and channel functions of tight junctions in response to physiological stimuli. Homopolymers interact with CLDN3, but not CLDN1, homopolymers. Directly interacts with TJP1/ZO-1, TJP2/ZO-2 and TJP3/ZO-3. In terms of processing, the disulfide bond is necessary for pore formation, but is not required for correct protein trafficking.

The protein resides in the cell junction. The protein localises to the tight junction. Its subcellular location is the cell membrane. The catalysed reaction is Na(+)(in) = Na(+)(out). The enzyme catalyses K(+)(in) = K(+)(out). It carries out the reaction Rb(+)(in) = Rb(+)(out). It catalyses the reaction Li(+)(in) = Li(+)(out). The catalysed reaction is Cs(+)(in) = Cs(+)(out). The enzyme catalyses Ca(2+)(in) = Ca(2+)(out). It carries out the reaction methylamine(out) = methylamine(in). It catalyses the reaction choline(out) = choline(in). The catalysed reaction is H2O(in) = H2O(out). Forms paracellular channels: polymerizes in tight junction strands with cation- and water-selective channels through the strands, conveying epithelial permeability in a process known as paracellular tight junction permeability. In intestinal epithelium, allows for sodium and water fluxes from the peritoneal side to the lumen of the intestine to regulate nutrient absorption and clear enteric pathogens as part of mucosal immune response. In kidney, allows passive sodium and calcium reabsorption across proximal tubules from the lumen back to the bloodstream. In the hepatobiliary tract, allows paracellular water and cation fluxes in the hepatic perivenous areas and biliary epithelium to generate bile flow and maintain osmotic gradients. The polypeptide is Claudin-2 (CLDN2) (Canis lupus familiaris (Dog)).